A 228-amino-acid chain; its full sequence is Deoxyribose-phosphate aldolase (228 aa).

The active-site Proton donor/acceptor is Asp96. The active-site Schiff-base intermediate with acetaldehyde is Lys157. Lys185 functions as the Proton donor/acceptor in the catalytic mechanism.

The protein belongs to the DeoC/FbaB aldolase family. DeoC type 1 subfamily.

The protein resides in the cytoplasm. The catalysed reaction is 2-deoxy-D-ribose 5-phosphate = D-glyceraldehyde 3-phosphate + acetaldehyde. It functions in the pathway carbohydrate degradation; 2-deoxy-D-ribose 1-phosphate degradation; D-glyceraldehyde 3-phosphate and acetaldehyde from 2-deoxy-alpha-D-ribose 1-phosphate: step 2/2. Catalyzes a reversible aldol reaction between acetaldehyde and D-glyceraldehyde 3-phosphate to generate 2-deoxy-D-ribose 5-phosphate. This chain is Deoxyribose-phosphate aldolase, found in Cyanothece sp. (strain PCC 7425 / ATCC 29141).